The primary structure comprises 635 residues: GTPase-GDP dissociation stimulator vimar (635 aa).

ARM repeat units lie at residues 72–118 (KSEV…NICY), 346–391 (TDSH…NLVI), 392–432 (PKPN…MTVD), and 510–550 (RSSL…ILSV).

In terms of assembly, interacts with Miro.

The protein resides in the endoplasmic reticulum. It is found in the mitochondrion. The protein localises to the cytoplasm. It localises to the cytosol. Its function is as follows. Probably acts as a GEF (guanine nucleotide exchange factor) for the Rho family of small GTP-binding proteins (G proteins) that stimulates the dissociation of GDP to enable subsequent binding of GTP. May also chaperone the processing and/or trafficking of small GTPases independently of GEF activity. By interacting with Miro, promotes mitochondrial fission in response to high calcium concentrations. The protein is GTPase-GDP dissociation stimulator vimar of Drosophila melanogaster (Fruit fly).